The chain runs to 98 residues: NADH-ubiquinone oxidoreductase chain 4L (98 aa).

The next 3 membrane-spanning stretches (helical) occupy residues 1–21 (MSLVHMNIALAFTVALLGLLM), 29–49 (SLLCLEGMMLTLFIMGTIMIL), and 61–81 (IILLVFAACEAAVGLSLLVMV).

This sequence belongs to the complex I subunit 4L family. As to quaternary structure, core subunit of respiratory chain NADH dehydrogenase (Complex I) which is composed of 45 different subunits.

It is found in the mitochondrion inner membrane. It carries out the reaction a ubiquinone + NADH + 5 H(+)(in) = a ubiquinol + NAD(+) + 4 H(+)(out). In terms of biological role, core subunit of the mitochondrial membrane respiratory chain NADH dehydrogenase (Complex I) which catalyzes electron transfer from NADH through the respiratory chain, using ubiquinone as an electron acceptor. Part of the enzyme membrane arm which is embedded in the lipid bilayer and involved in proton translocation. The sequence is that of NADH-ubiquinone oxidoreductase chain 4L (MT-ND4L) from Sorex unguiculatus (Long-clawed shrew).